Consider the following 339-residue polypeptide: Deubiquitinase and deneddylase Dub2 (339 aa).

Residues 36-56 (IIIALFLIVISCGLILCAYTF) form a helical membrane-spanning segment. Active-site residues include His-203, Asp-220, and Cys-282.

This sequence belongs to the peptidase C48 family.

It localises to the secreted. The protein resides in the host cell. Its subcellular location is the membrane. Effector proteins function to alter host cell physiology and promote bacterial survival in host tissues. This protease possesses deubiquitinating and deneddylating activities. The protein is Deubiquitinase and deneddylase Dub2 (cdu2) of Chlamydia trachomatis serovar B (strain Jali20/OT).